Reading from the N-terminus, the 544-residue chain is Protein angel homolog 2 (544 aa).

The protein belongs to the CCR4/nocturin family.

The protein is Protein angel homolog 2 (Angel2) of Mus musculus (Mouse).